The chain runs to 342 residues: Ion-translocating oxidoreductase complex subunit D (342 aa).

3 helical membrane-spanning segments follow: residues 42 to 62, 68 to 90, and 124 to 144; these read GSVINVLWAVIVALVSEALFL, NIAFYLKDYSAVVTAVLLGLALP, and AMVGYVLLLISFPVAMTQWLA. Residue Thr-171 is modified to FMN phosphoryl threonine. Helical transmembrane passes span 200-220, 227-247, 252-272, 286-306, and 308-328; these read FAGLGWEWVNLAFLLGGLYLI, WHIPAGFLAGLGLPALLAWLI, FADPLFQLFSGGAMLGAFFIA, LVYALLIGVLIWVIRTFGGYP, and AVAFSVLLLNLSAPFIDYYTQ.

The protein belongs to the NqrB/RnfD family. The complex is composed of six subunits: RnfA, RnfB, RnfC, RnfD, RnfE and RnfG. FMN serves as cofactor.

The protein localises to the cell inner membrane. Its function is as follows. Part of a membrane-bound complex that couples electron transfer with translocation of ions across the membrane. The sequence is that of Ion-translocating oxidoreductase complex subunit D from Alcanivorax borkumensis (strain ATCC 700651 / DSM 11573 / NCIMB 13689 / SK2).